Consider the following 141-residue polypeptide: Large ribosomal subunit protein uL13 (141 aa).

The protein belongs to the universal ribosomal protein uL13 family. As to quaternary structure, part of the 50S ribosomal subunit.

Its function is as follows. This protein is one of the early assembly proteins of the 50S ribosomal subunit, although it is not seen to bind rRNA by itself. It is important during the early stages of 50S assembly. The chain is Large ribosomal subunit protein uL13 from Helicobacter acinonychis (strain Sheeba).